A 277-amino-acid chain; its full sequence is Putative phosphoenolpyruvate synthase regulatory protein (277 aa).

157-164 (GVSRSGKT) serves as a coordination point for ADP.

This sequence belongs to the pyruvate, phosphate/water dikinase regulatory protein family. PSRP subfamily.

It catalyses the reaction [pyruvate, water dikinase] + ADP = [pyruvate, water dikinase]-phosphate + AMP + H(+). The enzyme catalyses [pyruvate, water dikinase]-phosphate + phosphate + H(+) = [pyruvate, water dikinase] + diphosphate. In terms of biological role, bifunctional serine/threonine kinase and phosphorylase involved in the regulation of the phosphoenolpyruvate synthase (PEPS) by catalyzing its phosphorylation/dephosphorylation. The protein is Putative phosphoenolpyruvate synthase regulatory protein of Vibrio atlanticus (strain LGP32) (Vibrio splendidus (strain Mel32)).